We begin with the raw amino-acid sequence, 115 residues long: Large ribosomal subunit protein bL20 (115 aa).

It belongs to the bacterial ribosomal protein bL20 family.

In terms of biological role, binds directly to 23S ribosomal RNA and is necessary for the in vitro assembly process of the 50S ribosomal subunit. It is not involved in the protein synthesizing functions of that subunit. This is Large ribosomal subunit protein bL20 from Synechococcus sp. (strain WH7803).